A 492-amino-acid polypeptide reads, in one-letter code: GlcNAc-binding protein A (492 aa).

Positions 1 to 23 are cleaved as a signal peptide; that stretch reads MNKSSTKTLIALSMMAVSSGVSA. A Chitin-binding type-4 domain is found at 24–204; the sequence is HGYVSETNDG…AFYNVIDVKF (181 aa). A Chitin-binding type-3 domain is found at 443 to 484; sequence AGTKVLAEDSNVYQCKEFPYSGYCVQWTETATNFAPGVGSDW.

The protein belongs to the GbpA family.

The protein resides in the secreted. Probably interacts with GlcNAc residues. May promote attachment to both epithelial cell surfaces and chitin. This is GlcNAc-binding protein A from Aliivibrio fischeri (strain MJ11) (Vibrio fischeri).